The primary structure comprises 182 residues: Large ribosomal subunit protein uL10 (182 aa).

This sequence belongs to the universal ribosomal protein uL10 family. Part of the ribosomal stalk of the 50S ribosomal subunit. The N-terminus interacts with L11 and the large rRNA to form the base of the stalk. The C-terminus forms an elongated spine to which L12 dimers bind in a sequential fashion forming a multimeric L10(L12)X complex.

Functionally, forms part of the ribosomal stalk, playing a central role in the interaction of the ribosome with GTP-bound translation factors. This chain is Large ribosomal subunit protein uL10, found in Parafrankia sp. (strain EAN1pec).